The following is a 152-amino-acid chain: FAD synthase (152 aa).

ATP-binding positions include 9–10 (TF), 14–17 (HPGH), and D92.

The protein belongs to the archaeal FAD synthase family. In terms of assembly, homodimer. Requires a divalent metal cation as cofactor.

It carries out the reaction FMN + ATP + H(+) = FAD + diphosphate. Its pathway is cofactor biosynthesis; FAD biosynthesis; FAD from FMN: step 1/1. In terms of biological role, catalyzes the transfer of the AMP portion of ATP to flavin mononucleotide (FMN) to produce flavin adenine dinucleotide (FAD) coenzyme. The chain is FAD synthase from Ferroglobus placidus (strain DSM 10642 / AEDII12DO).